A 195-amino-acid chain; its full sequence is Inner membrane protein YohC (195 aa).

Residues 1–32 lie on the Cytoplasmic side of the membrane; sequence MSHVWGLFSHPDREMQVINRENETISHHYTHH. Residues 33-55 traverse the membrane as a helical segment; it reads VLLMAAIPVICAFIGTTQIGWNF. The Periplasmic portion of the chain corresponds to 56–64; sequence GDGTILKLS. A helical transmembrane segment spans residues 65-87; it reads WFTGLALAVLFYGVMLAGVAVMG. At 88-107 the chain is on the cytoplasmic side; it reads RVIWWMARNYPQRPSLAHCM. The chain crosses the membrane as a helical span at residues 108–130; sequence VFAGYVATPLFLSGLVALYPLVW. Residues 131 to 134 lie on the Periplasmic side of the membrane; the sequence is LCAL. A helical membrane pass occupies residues 135-157; sequence VGTVALFYTGYLLYLGIPSFLNI. Residues 158 to 169 lie on the Cytoplasmic side of the membrane; it reads NKEEGLSFSSST. A helical transmembrane segment spans residues 170 to 192; the sequence is LAIGVLVLEVLLALTVILWGYGY. The Periplasmic portion of the chain corresponds to 193 to 195; sequence RLF.

It localises to the cell inner membrane. In Escherichia coli O6:H1 (strain CFT073 / ATCC 700928 / UPEC), this protein is Inner membrane protein YohC (yohC).